We begin with the raw amino-acid sequence, 327 residues long: uncharacterized protein (327 aa).

Residues 1–19 (MSIAQDRGIVFKLLSIYRA) lie on the Cytoplasmic side of the membrane. A helical membrane pass occupies residues 20–40 (AAGIFMALAQLIVIFFGYCDF). The Extracellular portion of the chain corresponds to 41 to 51 (KIKGYRIASYN). Residues 52-72 (APTFASSFIILAVCLLLVVVL) traverse the membrane as a helical segment. Topologically, residues 73–104 (ENPEVKVTNSENSLFSALKQFFRVERKKLISC) are cytoplasmic. A helical membrane pass occupies residues 105–125 (LILLWSMFLSSFIMSEVVYFM). The Extracellular segment spans residues 126 to 141 (PLFLTLHVNWDTKFQG). The helical transmembrane segment at 142–162 (IAFMVASILGVTGSYFAPKLI) threads the bilayer. Over 163–199 (NVGCSCGRAKDGGLEESDTTGSETVEVKKKDSLYSGQ) the chain is Cytoplasmic. A helical membrane pass occupies residues 200–220 (VFLSIFALFVSLLGQAFMIGA). Over 221–235 (SEALKHKSMPPTNSG) the chain is Extracellular. The chain crosses the membrane as a helical span at residues 236 to 256 (IFFSAGMSITLLGYNFLASSI). Topologically, residues 257–275 (PALFSMYIDPKLKVQLMPS) are cytoplasmic. A helical membrane pass occupies residues 276-296 (IGAISGIGKLVAPIVLAALYG). The Extracellular segment spans residues 297 to 300 (TRLG). The chain crosses the membrane as a helical span at residues 301-321 (LSIAVGFGMILVAVSIPPLIW). Residues 322–327 (LRKKRC) are Cytoplasmic-facing.

The protein resides in the membrane. This is an uncharacterized protein from Saccharomyces cerevisiae (strain ATCC 204508 / S288c) (Baker's yeast).